We begin with the raw amino-acid sequence, 143 residues long: 3-hydroxyacyl-[acyl-carrier-protein] dehydratase FabZ (143 aa).

The active site involves His49.

Belongs to the thioester dehydratase family. FabZ subfamily.

The protein resides in the cytoplasm. The catalysed reaction is a (3R)-hydroxyacyl-[ACP] = a (2E)-enoyl-[ACP] + H2O. Involved in unsaturated fatty acids biosynthesis. Catalyzes the dehydration of short chain beta-hydroxyacyl-ACPs and long chain saturated and unsaturated beta-hydroxyacyl-ACPs. This is 3-hydroxyacyl-[acyl-carrier-protein] dehydratase FabZ from Wolbachia sp. subsp. Drosophila simulans (strain wRi).